A 370-amino-acid chain; its full sequence is Queuine tRNA-ribosyltransferase (370 aa).

Asp-89 serves as the catalytic Proton acceptor. Residues 89–93 (DSGGF), Asp-143, Gln-187, and Gly-214 contribute to the substrate site. Residues 245–251 (GVGKPED) form an RNA binding region. Residue Asp-264 is the Nucleophile of the active site. Residues 269–273 (TRNAR) are RNA binding; important for wobble base 34 recognition. The Zn(2+) site is built by Cys-302, Cys-304, Cys-307, and His-333.

The protein belongs to the queuine tRNA-ribosyltransferase family. In terms of assembly, homodimer. Within each dimer, one monomer is responsible for RNA recognition and catalysis, while the other monomer binds to the replacement base PreQ1. The cofactor is Zn(2+).

It carries out the reaction 7-aminomethyl-7-carbaguanine + guanosine(34) in tRNA = 7-aminomethyl-7-carbaguanosine(34) in tRNA + guanine. It participates in tRNA modification; tRNA-queuosine biosynthesis. Functionally, catalyzes the base-exchange of a guanine (G) residue with the queuine precursor 7-aminomethyl-7-deazaguanine (PreQ1) at position 34 (anticodon wobble position) in tRNAs with GU(N) anticodons (tRNA-Asp, -Asn, -His and -Tyr). Catalysis occurs through a double-displacement mechanism. The nucleophile active site attacks the C1' of nucleotide 34 to detach the guanine base from the RNA, forming a covalent enzyme-RNA intermediate. The proton acceptor active site deprotonates the incoming PreQ1, allowing a nucleophilic attack on the C1' of the ribose to form the product. After dissociation, two additional enzymatic reactions on the tRNA convert PreQ1 to queuine (Q), resulting in the hypermodified nucleoside queuosine (7-(((4,5-cis-dihydroxy-2-cyclopenten-1-yl)amino)methyl)-7-deazaguanosine). The polypeptide is Queuine tRNA-ribosyltransferase (Baumannia cicadellinicola subsp. Homalodisca coagulata).